Here is a 445-residue protein sequence, read N- to C-terminus: Phosphoglucosamine mutase (445 aa).

Serine 102 acts as the Phosphoserine intermediate in catalysis. Residues serine 102, aspartate 241, aspartate 243, and aspartate 245 each coordinate Mg(2+). Serine 102 is modified (phosphoserine).

The protein belongs to the phosphohexose mutase family. Requires Mg(2+) as cofactor. Post-translationally, activated by phosphorylation.

The enzyme catalyses alpha-D-glucosamine 1-phosphate = D-glucosamine 6-phosphate. Its function is as follows. Catalyzes the conversion of glucosamine-6-phosphate to glucosamine-1-phosphate. The sequence is that of Phosphoglucosamine mutase from Haemophilus influenzae (strain 86-028NP).